A 478-amino-acid polypeptide reads, in one-letter code: MDKKVLIKRFSEAIEKGNAAIFAGAGLSMSQGYVSWPELLNDPATEIGLDSKKETDLVTLAQYYKNENGGSRGILNQILMDNFGEELEISENHRILASLPIETYWTTNYDHLIEKSIREAYKNPQVKKNYTQLATTNPNVDTIVYKMHGDIDDVSSTVITRDDYEKYDDDSYALFKETLKGDLLTKTFLFLGFSFTDPNLERILSDIRWVLRENQRPHYCIMRKILKENFVDSEDFFDQERYNYELTKRRLQINDLSRFSINVVEVDDYSEITDILKSIRKKYLRKTIFISGSAVDYTPFTSESKGLKFVEKLAYRLSESGYRIVSGYGLGIGNSIVSGVLKQRRNLRKNNIQDVLSLRPLPLDMPHEWRRYRENIIAESGISIFVFGNKLESGEIVTADGMIEEFELSVQNENIVVPIGFTKGASKVLFDKIQENFSDYFDDSLKSKFQALEKLDTEGEVDKKVEQIVSLINSIQED.

Residues 1–287 (MDKKVLIKRF…SIRKKYLRKT (287 aa)) form the Deacetylase sirtuin-type domain. The NAD(+) site is built by Ala19, Asp110, and His148. Residue His148 is the Proton acceptor of the active site. The interval 288-478 (IFISGSAVDY…VSLINSIQED (191 aa)) is SLOG (STALD) domain. Residues Gly292, Ser293, Leu330, Arg373, Lys390, Gly401, and Glu405 each coordinate 3'cADPR.

It belongs to the soluble Thoeris ThsA family. In terms of assembly, homotetramer in solution.

It carries out the reaction NAD(+) + H2O = ADP-D-ribose + nicotinamide + H(+). Its activity is regulated as follows. Activated by 3'cADPR. In terms of biological role, NAD(+) hydrolyzing component (NADase) of the Thoeris antiviral defense system, composed of ThsA and ThsB (maybe AS248_15445). Activated by 3' cyclic ADP-D-ribose (3'cADPR) but not its isomers 2'cADPR, cADPR and very weakly by ADPR; binds 3'cADPR better than 2'cADPR. Upon activation binds and hydrolyzes NAD(+), leading to cell death and inhibition of phage replication. The chain is NAD(+) hydrolase ThsA from Enterococcus faecium (Streptococcus faecium).